The primary structure comprises 606 residues: Phosphomethylpyrimidine synthase (606 aa).

The disordered stretch occupies residues 84 to 103; the sequence is EPYPARSVKPEDNGLTSSPI. Substrate contacts are provided by residues N209, M238, Y267, H303, 323-325, 364-367, and E403; these read SRG and DGLR. H407 contributes to the Zn(2+) binding site. Y430 is a substrate binding site. Residue H471 coordinates Zn(2+). [4Fe-4S] cluster contacts are provided by C551, C554, and C559.

The protein belongs to the ThiC family. Homodimer. [4Fe-4S] cluster is required as a cofactor.

The catalysed reaction is 5-amino-1-(5-phospho-beta-D-ribosyl)imidazole + S-adenosyl-L-methionine = 4-amino-2-methyl-5-(phosphooxymethyl)pyrimidine + CO + 5'-deoxyadenosine + formate + L-methionine + 3 H(+). It functions in the pathway cofactor biosynthesis; thiamine diphosphate biosynthesis. Functionally, catalyzes the synthesis of the hydroxymethylpyrimidine phosphate (HMP-P) moiety of thiamine from aminoimidazole ribotide (AIR) in a radical S-adenosyl-L-methionine (SAM)-dependent reaction. The sequence is that of Phosphomethylpyrimidine synthase from Bartonella tribocorum (strain CIP 105476 / IBS 506).